The chain runs to 95 residues: Aspartyl/glutamyl-tRNA(Asn/Gln) amidotransferase subunit C (95 aa).

It belongs to the GatC family. In terms of assembly, heterotrimer of A, B and C subunits.

The catalysed reaction is L-glutamyl-tRNA(Gln) + L-glutamine + ATP + H2O = L-glutaminyl-tRNA(Gln) + L-glutamate + ADP + phosphate + H(+). It catalyses the reaction L-aspartyl-tRNA(Asn) + L-glutamine + ATP + H2O = L-asparaginyl-tRNA(Asn) + L-glutamate + ADP + phosphate + 2 H(+). Allows the formation of correctly charged Asn-tRNA(Asn) or Gln-tRNA(Gln) through the transamidation of misacylated Asp-tRNA(Asn) or Glu-tRNA(Gln) in organisms which lack either or both of asparaginyl-tRNA or glutaminyl-tRNA synthetases. The reaction takes place in the presence of glutamine and ATP through an activated phospho-Asp-tRNA(Asn) or phospho-Glu-tRNA(Gln). The sequence is that of Aspartyl/glutamyl-tRNA(Asn/Gln) amidotransferase subunit C from Acetivibrio thermocellus (strain ATCC 27405 / DSM 1237 / JCM 9322 / NBRC 103400 / NCIMB 10682 / NRRL B-4536 / VPI 7372) (Clostridium thermocellum).